Here is a 396-residue protein sequence, read N- to C-terminus: Elongation factor Tu 2 (396 aa).

Residues 10–206 (KPHVNVGTIG…ALDTYIPTPE (197 aa)) form the tr-type G domain. Residues 19–26 (GHVDHGKT) are G1. 19–26 (GHVDHGKT) contributes to the GTP binding site. Thr-26 contacts Mg(2+). A G2 region spans residues 60 to 64 (GITIN). The tract at residues 81 to 84 (DCPG) is G3. GTP contacts are provided by residues 81–85 (DCPGH) and 136–139 (NKCD). A G4 region spans residues 136-139 (NKCD). Residues 174 to 176 (SAK) are G5.

The protein belongs to the TRAFAC class translation factor GTPase superfamily. Classic translation factor GTPase family. EF-Tu/EF-1A subfamily. Monomer.

Its subcellular location is the cytoplasm. The catalysed reaction is GTP + H2O = GDP + phosphate + H(+). Functionally, GTP hydrolase that promotes the GTP-dependent binding of aminoacyl-tRNA to the A-site of ribosomes during protein biosynthesis. This Acidovorax sp. (strain JS42) protein is Elongation factor Tu 2.